The following is a 583-amino-acid chain: Protein disulfide-isomerase-like protein of the testis (583 aa).

A signal peptide spans 1 to 17 (MDLLWMPLLLVAARISA). N-linked (GlcNAc...) asparagine glycans are attached at residues Asn58, Asn128, Asn160, and Asn340. The Thioredoxin domain maps to 388–451 (LVKQLVGKNF…IAKIDITAND (64 aa)). Composition is skewed to basic and acidic residues over residues 522–531 (EVPMMKKELP) and 540–559 (NVTK…KTSE). A disordered region spans residues 522–583 (EVPMMKKELP…KKKPKVKEEL (62 aa)). N-linked (GlcNAc...) asparagine glycosylation is present at Asn540. A compositionally biased stretch (basic residues) spans 573–583 (QKKKPKVKEEL). The short motif at 580-583 (KEEL) is the Prevents secretion from ER element.

The protein belongs to the protein disulfide isomerase family. In terms of assembly, homodimer. The homodimer is not disulfide-linked. Interacts with ERO1A and CLGN. N-glycosylated.

The protein resides in the endoplasmic reticulum. Its function is as follows. Probable redox-inactive chaperone involved in spermatogenesis. The protein is Protein disulfide-isomerase-like protein of the testis (PDILT) of Macaca fascicularis (Crab-eating macaque).